A 607-amino-acid chain; its full sequence is T-box transcription factor TBX18 (607 aa).

The Engrailed homology 1 repressor signature appears at 18 to 28 (HAFSVEALIGA). Residues 30–141 (KQQQLQKKRR…PLPSPQAPRV (112 aa)) form a disordered region. The Nuclear localization signal motif lies at 36–40 (KKRRK). The segment covering 44–53 (EEAAGAVDDG) has biased composition (low complexity). Positions 143 to 330 (LQGAELWKRF…RNPFAKGFRD (188 aa)) form a DNA-binding region, T-box.

In terms of assembly, homodimer. Can form a heterodimer with TBX15. Interacts with GATA4 and NKX2-5. Interacts with PAX3. Interacts (via engrailed homology 1 repressor motif) with TLE3; this interaction represses TBX18 transcriptional activity. Interacts with SIX1.

The protein localises to the nucleus. Acts as a transcriptional repressor involved in developmental processes of a variety of tissues and organs, including the heart and coronary vessels, the ureter and the vertebral column. Required for embryonic development of the sino atrial node (SAN) head area. This Homo sapiens (Human) protein is T-box transcription factor TBX18 (TBX18).